The following is a 100-amino-acid chain: UPF0235 protein TC_0667 (100 aa).

The protein belongs to the UPF0235 family.

This Chlamydia muridarum (strain MoPn / Nigg) protein is UPF0235 protein TC_0667.